We begin with the raw amino-acid sequence, 378 residues long: Dof zinc finger protein 1 (378 aa).

Positions 28 to 38 (GANPNPAATAP) are enriched in low complexity. Positions 28 to 79 (GANPNPAATAPSSVTGGALRGGGGGGAPPVAGGAGAGSTERRARPQKEKALN) are disordered. Over residues 45–63 (ALRGGGGGGAPPVAGGAGA) the composition is skewed to gly residues. Basic and acidic residues predominate over residues 66–77 (TERRARPQKEKA). Residues 78–132 (LNCPRCNSTNTKFCYYNNYSLQQPRYFCKTCRRYWTEGGSLRNVPVGGGSRKNKR) form a Dof-type zinc finger. Zn(2+)-binding residues include C80, C83, C105, and C108. 3 disordered regions span residues 116 to 148 (GSLRNVPVGGGSRKNKRSSSSAASASPASASTA), 203 to 222 (SLESSSVCNPGGPMGTNGRG), and 316 to 378 (LKPT…GTSW). Over residues 133-148 (SSSSAASASPASASTA) the composition is skewed to low complexity. Composition is skewed to gly residues over residues 323-338 (GTGGGGASGGGAGVDG), 350-361 (AGGGGGGPGGHD), and 369-378 (MIGGGSGTSW).

The protein resides in the nucleus. Its function is as follows. Transcription factor that may transactivate seed storage protein genes in developing seeds. The protein is Dof zinc finger protein 1 of Oryza sativa subsp. japonica (Rice).